The primary structure comprises 308 residues: Nodulation protein D 1 (308 aa).

The HTH lysR-type domain maps to L6–T63. The H-T-H motif DNA-binding region spans L23–A42.

This sequence belongs to the LysR transcriptional regulatory family.

In terms of biological role, nodD regulates the expression of the nodABCFE genes which encode other nodulation proteins. NodD is also a negative regulator of its own expression. Binds flavonoids as inducers. This Rhizobium meliloti (strain 1021) (Ensifer meliloti) protein is Nodulation protein D 1 (nodD1).